We begin with the raw amino-acid sequence, 539 residues long: Dihydrolipoyllysine-residue acetyltransferase component 3 of pyruvate dehydrogenase complex, mitochondrial (539 aa).

Residues 1–102 (MAYASRIINH…SCLMQSARGF (102 aa)) constitute a mitochondrion transit peptide. The Lipoyl-binding domain occupies 111-187 (HQEIGMPSLS…QVGEVIAITV (77 aa)). The residue at position 152 (K152) is an N6-lipoyllysine. The disordered stretch occupies residues 195 to 247 (KFKDYTPSSTADAAPTKAEPTPAPPKEEKVKQPSSPPEPKASKPSTPPTGDRV). Residues 204–214 (TADAAPTKAEP) show a composition bias toward low complexity. The region spanning 248–285 (FASPLARKLAEDNNVPLSDIEGTGPEGRIVKADIDEYL) is the Peripheral subunit-binding (PSBD) domain. Active-site residues include H512 and D516.

The protein belongs to the 2-oxoacid dehydrogenase family. The cofactor is (R)-lipoate.

Its subcellular location is the mitochondrion matrix. The enzyme catalyses N(6)-[(R)-dihydrolipoyl]-L-lysyl-[protein] + acetyl-CoA = N(6)-[(R)-S(8)-acetyldihydrolipoyl]-L-lysyl-[protein] + CoA. The pyruvate dehydrogenase complex catalyzes the overall conversion of pyruvate to acetyl-CoA and CO(2). It contains multiple copies of three enzymatic components: pyruvate dehydrogenase (E1), dihydrolipoamide acetyltransferase (E2) and lipoamide dehydrogenase (E3). The sequence is that of Dihydrolipoyllysine-residue acetyltransferase component 3 of pyruvate dehydrogenase complex, mitochondrial from Arabidopsis thaliana (Mouse-ear cress).